The sequence spans 218 residues: Adenylate kinase (218 aa).

ATP is bound at residue 10–15 (GAGKGT). Residues 30–59 (STGDMLRAAIQAQTPLGLEAKKVMDDGKLV) form an NMP region. AMP is bound by residues Thr-31, Arg-36, 57 to 59 (KLV), 85 to 88 (GFPR), and Gln-92. The tract at residues 122–159 (GRRVHLASGRTYHVIFNPPKKEGVDDITGEPLIQREDD) is LID. ATP contacts are provided by residues Arg-123 and 132–133 (TY). 2 residues coordinate AMP: Arg-156 and Arg-167. Gly-203 is a binding site for ATP.

It belongs to the adenylate kinase family. In terms of assembly, monomer.

It is found in the cytoplasm. It catalyses the reaction AMP + ATP = 2 ADP. Its pathway is purine metabolism; AMP biosynthesis via salvage pathway; AMP from ADP: step 1/1. In terms of biological role, catalyzes the reversible transfer of the terminal phosphate group between ATP and AMP. Plays an important role in cellular energy homeostasis and in adenine nucleotide metabolism. The polypeptide is Adenylate kinase (Prosthecochloris aestuarii (strain DSM 271 / SK 413)).